The sequence spans 465 residues: D(1C) dopamine receptor (465 aa).

Residues 1–30 lie on the Extracellular side of the membrane; it reads MENFSIFNVTVNVWHADLDVGNSDLSLRAL. Residues Asn3 and Asn8 are each glycosylated (N-linked (GlcNAc...) asparagine). Residues 31 to 54 form a helical membrane-spanning segment; the sequence is TGLLLSLLILSTLLGNTLVCLAVI. Residues 55 to 65 are Cytoplasmic-facing; the sequence is KFRHLRSKVTN. Residues 66-92 traverse the membrane as a helical segment; sequence FFVISLAVSDLFVALLVMPWKAVTEVA. At 93–101 the chain is on the extracellular side; the sequence is GFWVFGDFC. A disulfide bridge connects residues Cys101 and Cys187. A helical transmembrane segment spans residues 102–124; that stretch reads DTWVAFDIMCSTASILNLCIISL. The Cytoplasmic portion of the chain corresponds to 125 to 143; sequence DRYWAIASPFRYERKMTQR. The chain crosses the membrane as a helical span at residues 144 to 168; sequence VAFIMIGVAWTLSILISFIPVQLSW. The Extracellular segment spans residues 169-193; it reads HKSHEADEELNGVNHTENCDSSLNR. The chain crosses the membrane as a helical span at residues 194 to 219; that stretch reads TYAISSSLISFYIPVVIMIGTYTRIY. Topologically, residues 220 to 264 are cytoplasmic; sequence RIAQTQIRRISSLERAVEHAQRCSSRLSNENSLKTSFRKETKVLK. The chain crosses the membrane as a helical span at residues 265–291; it reads TLSIIMGVFVFCWLPFFVLNCMIPFCH. At 292-309 the chain is on the extracellular side; it reads MNLPGQNEPEPPCVSETT. A helical membrane pass occupies residues 310-334; it reads FNIFVWFGWANSSLNPVIYAFNADF. Residues 335–465 are Cytoplasmic-facing; sequence RKAFTTILGC…EDRHYTTKLY (131 aa). Cys344 carries the S-palmitoyl cysteine lipid modification.

This sequence belongs to the G-protein coupled receptor 1 family. As to expression, brain and kidney.

It is found in the cell membrane. It localises to the cell projection. The protein resides in the cilium membrane. Functionally, this is one of the five types (D1 to D5) of receptors for dopamine. The activity of this receptor is mediated by G proteins which activate adenylyl cyclase. The chain is D(1C) dopamine receptor (drd1c) from Xenopus laevis (African clawed frog).